The following is a 325-amino-acid chain: Small ribosomal subunit protein RACK1 (325 aa).

WD repeat units follow at residues 13 to 44, 61 to 91, 103 to 133, 147 to 179, 191 to 221, 232 to 261, and 291 to 321; these read AHTD…ILWH, GHSH…RLWD, GHTK…KLWN, AHSD…KVWN, GHSG…LLWD, DAGS…KIWD, and KKVI…RVWG.

Belongs to the WD repeat G protein beta family. Ribosomal protein RACK1 subfamily.

In terms of biological role, plays a role in hormone-mediated cell division. The sequence is that of Small ribosomal subunit protein RACK1 (GB1) from Medicago sativa (Alfalfa).